A 70-amino-acid polypeptide reads, in one-letter code: Conotoxin Im23.4 (70 aa).

Residues 1–22 (MIMRMTLTLFVLVVMTAASASG) form the signal peptide. Residues 23-30 (DALTEAKR) constitute a propeptide that is removed on maturation. 3 disulfides stabilise this stretch: Cys34-Cys41, Cys45-Cys53, and Cys54-Cys69.

This sequence belongs to the conotoxin K superfamily. Expressed by the venom duct.

Its subcellular location is the secreted. Its function is as follows. Probable neurotoxin. This is Conotoxin Im23.4 from Conus imperialis (Imperial cone).